Reading from the N-terminus, the 131-residue chain is UPF0102 protein Ent638_3585 (131 aa).

The segment at 1–20 (MAQIPAGADRPGKLSRKQTG) is disordered.

It belongs to the UPF0102 family.

This chain is UPF0102 protein Ent638_3585, found in Enterobacter sp. (strain 638).